The sequence spans 1255 residues: Period circadian protein homolog 2 (1255 aa).

Positions 1 to 79 are disordered; sequence MNGYAEFPPS…EPPDARQSPD (79 aa). Positions 35-56 are enriched in polar residues; that stretch reads SSGSSGHETNENCSTGRDSQGS. Residues 111-120 carry the Nuclear export signal 1 motif; sequence LIKTLKELKV. The PAS 1 domain occupies 181-248; it reads VTSEHIVKNA…FHSFTSPYKL (68 aa). The LXXLL motif lies at 308–312; it reads LCCLL. One can recognise a PAS 2 domain in the interval 321–387; it reads YEAPRIPPEK…MLAIHKKILQ (67 aa). Residues 395–438 enclose the PAC domain; it reads YSPIRFRARNGEYITLDTSWSSFINPWSRKISFIIGRHKVRVGP. Residues 462–471 carry the Nuclear export signal 2 motif; that stretch reads LTEQIHRLLL. Disordered stretches follow at residues 473-557 and 617-646; these read PVPH…AVPA and RSSDKRKATVSPGPHAGEAEPPSRVNSRTG. An important for protein stability region spans residues 480–484; sequence SGYGS. The segment covering 504–516 has biased composition (basic and acidic residues); the sequence is NGHEDSRRRRAEI. A CSNK1E binding domain region spans residues 512-717; that stretch reads RRAEICKNGN…ALACGLSQEK (206 aa). Phosphoserine occurs at positions 527, 530, 533, and 540. Positions 529-541 are enriched in basic and acidic residues; it reads YSHESGEQKKKSV. A phosphoserine mark is found at Ser662, Ser696, Ser700, Ser714, Ser766, and Ser771. Disordered stretches follow at residues 764-838 and 931-985; these read ERSK…DTSQ and FPSH…QSRS. A Nuclear localization signal motif is present at residues 789–805; sequence KKTGKNRKLKSKRVKPR. The span at 790–803 shows a compositional bias: basic residues; the sequence is KTGKNRKLKSKRVK. 2 stretches are compositionally biased toward polar residues: residues 829–838 and 936–956; these read TAWSPSDTSQ and TLTSEMASASQPEFPSRTSIP. The segment at 888 to 1071 is interaction with PPARG; it reads QFAVQPPPFP…NEDLCSASGS (184 aa). Ser945 bears the Phosphoserine mark. Low complexity predominate over residues 959 to 972; it reads PCACPATRATPPSA. Ser977 is modified (phosphoserine). A Nuclear export signal 3 motif is present at residues 989-996; sequence LQLNLLQL. A disordered region spans residues 1018-1050; sequence VGADCKPGTSRDQQPKAPLTRDEPSDTQNSDAL. The LXXLL signature appears at 1057-1061; the sequence is LNLLL. The disordered stretch occupies residues 1077 to 1106; sequence LGSGSLGCDASPSGAGSSDTSHTSKYFGSI. A compositionally biased stretch (polar residues) spans 1090–1106; it reads GAGSSDTSHTSKYFGSI. A Phosphoserine modification is found at Ser1124. The tract at residues 1155–1255 is CRY binding domain; it reads SRNLEAVLKE…PLNHRIEEQT (101 aa). The disordered stretch occupies residues 1231 to 1255; sequence GLSEVSDTKEDENGSPLNHRIEEQT.

As to quaternary structure, homodimer. Component of the circadian core oscillator, which includes the CRY proteins, CLOCK or NPAS2, BMAL1 or BMAL2, CSNK1D and/or CSNK1E, TIMELESS, and the PER proteins. Interacts with CLOCK-BMAL1 (off DNA). Interacts with BMAL2. Interacts directly with PER1 and PER3, and through a C-terminal domain, with CRY1 and CRY2. Interacts (via PAS 2 domain) with TIMELESS. Interacts with NFIL3. Different large complexes have been identified with different repressive functions. The core of PER complexes is composed of at least PER1, PER2, PER3, CRY1, CRY2, CSNK1D and/or CSNK1E. The large PER complex involved in the repression of transcriptional termination is composed of at least PER2, CDK9, DDX5, DHX9, NCBP1 and POLR2A (active). The large PER complex involved in the histone deacetylation is composed of at least HDAC1, PER2, SFPQ and SIN3A. The large PER complex involved in the histone methylation is composed of at least PER2, CBX3, TRIM28, SUV39H1 and/or SUV39H2; CBX3 mediates the formation of the complex. Interacts with SETX; the interaction inhibits termination of circadian target genes. Interacts with the nuclear receptors HNF4A, NR1D1, NR4A2, RORA, PPARA, PPARG and THRA; the interaction with at least PPARG is ligand dependent. Interacts with PML. Interacts (phosphorylated) with BTRC and FBXW11; the interactions trigger proteasomal degradation. Interacts with NONO and SFPQ. Interacts with CAVIN3. Interacts with MAGEL2. Interacts with MAP1LC3B. Interacts with HNF4A. Acetylated. Deacetylated by SIRT1, resulting in decreased protein stability. Deacetylated by SIRT6, preventing its degradation by the proteasome, resulting in increased protein stability. In terms of processing, phosphorylated by CSNK1E and CSNK1D. Phosphorylation results in PER2 protein degradation. May be dephosphorylated by PP1. Post-translationally, ubiquitinated, leading to its proteasomal degradation. Ubiquitination may be inhibited by CRY1. As to expression, widely expressed. Found in heart, brain, placenta, lung, liver, skeleatal muscle, kidney and pancreas. High levels in skeletal muscle and pancreas. Low levels in lung. Isoform 2 is expressed in keratinocytes (at protein level).

The protein localises to the nucleus. The protein resides in the cytoplasm. It is found in the perinuclear region. Its subcellular location is the nucleolus. Transcriptional repressor which forms a core component of the circadian clock. The circadian clock, an internal time-keeping system, regulates various physiological processes through the generation of approximately 24 hour circadian rhythms in gene expression, which are translated into rhythms in metabolism and behavior. It is derived from the Latin roots 'circa' (about) and 'diem' (day) and acts as an important regulator of a wide array of physiological functions including metabolism, sleep, body temperature, blood pressure, endocrine, immune, cardiovascular, and renal function. Consists of two major components: the central clock, residing in the suprachiasmatic nucleus (SCN) of the brain, and the peripheral clocks that are present in nearly every tissue and organ system. Both the central and peripheral clocks can be reset by environmental cues, also known as Zeitgebers (German for 'timegivers'). The predominant Zeitgeber for the central clock is light, which is sensed by retina and signals directly to the SCN. The central clock entrains the peripheral clocks through neuronal and hormonal signals, body temperature and feeding-related cues, aligning all clocks with the external light/dark cycle. Circadian rhythms allow an organism to achieve temporal homeostasis with its environment at the molecular level by regulating gene expression to create a peak of protein expression once every 24 hours to control when a particular physiological process is most active with respect to the solar day. Transcription and translation of core clock components (CLOCK, NPAS2, BMAL1, BMAL2, PER1, PER2, PER3, CRY1 and CRY2) plays a critical role in rhythm generation, whereas delays imposed by post-translational modifications (PTMs) are important for determining the period (tau) of the rhythms (tau refers to the period of a rhythm and is the length, in time, of one complete cycle). A diurnal rhythm is synchronized with the day/night cycle, while the ultradian and infradian rhythms have a period shorter and longer than 24 hours, respectively. Disruptions in the circadian rhythms contribute to the pathology of cardiovascular diseases, cancer, metabolic syndrome and aging. A transcription/translation feedback loop (TTFL) forms the core of the molecular circadian clock mechanism. Transcription factors, CLOCK or NPAS2 and BMAL1 or BMAL2, form the positive limb of the feedback loop, act in the form of a heterodimer and activate the transcription of core clock genes and clock-controlled genes (involved in key metabolic processes), harboring E-box elements (5'-CACGTG-3') within their promoters. The core clock genes: PER1/2/3 and CRY1/2 which are transcriptional repressors form the negative limb of the feedback loop and interact with the CLOCK|NPAS2-BMAL1|BMAL2 heterodimer inhibiting its activity and thereby negatively regulating their own expression. This heterodimer also activates nuclear receptors NR1D1/2 and RORA/B/G, which form a second feedback loop and which activate and repress BMAL1 transcription, respectively. PER1 and PER2 proteins transport CRY1 and CRY2 into the nucleus with appropriate circadian timing, but also contribute directly to repression of clock-controlled target genes through interaction with several classes of RNA-binding proteins, helicases and others transcriptional repressors. PER appears to regulate circadian control of transcription by at least three different modes. First, interacts directly with the CLOCK-BMAL1 at the tail end of the nascent transcript peak to recruit complexes containing the SIN3-HDAC that remodel chromatin to repress transcription. Second, brings H3K9 methyltransferases such as SUV39H1 and SUV39H2 to the E-box elements of the circadian target genes, like PER2 itself or PER1. The recruitment of each repressive modifier to the DNA seems to be very precisely temporally orchestrated by the large PER complex, the deacetylases acting before than the methyltransferases. Additionally, large PER complexes are also recruited to the target genes 3' termination site through interactions with RNA-binding proteins and helicases that may play a role in transcription termination to regulate transcription independently of CLOCK-BMAL1 interactions. Recruitment of large PER complexes to the elongating polymerase at PER and CRY termination sites inhibited SETX action, impeding RNA polymerase II release and thereby repressing transcriptional reinitiation. May propagate clock information to metabolic pathways via the interaction with nuclear receptors. Coactivator of PPARA and corepressor of NR1D1, binds rhythmically at the promoter of nuclear receptors target genes like BMAL1 or G6PC1. Directly and specifically represses PPARG proadipogenic activity by blocking PPARG recruitment to target promoters and thereby inhibiting transcriptional activation. Required for fatty acid and lipid metabolism, is involved as well in the regulation of circulating insulin levels. Plays an important role in the maintenance of cardiovascular functions through the regulation of NO and vasodilatatory prostaglandins production in aortas. Controls circadian glutamate uptake in synaptic vesicles through the regulation of VGLUT1 expression. May also be involved in the regulation of inflammatory processes. Represses the CLOCK-BMAL1 induced transcription of BHLHE40/DEC1 and ATF4. Negatively regulates the formation of the TIMELESS-CRY1 complex by competing with TIMELESS for binding to CRY1. The sequence is that of Period circadian protein homolog 2 (PER2) from Homo sapiens (Human).